The chain runs to 143 residues: Peptide methionine sulfoxide reductase MsrB (143 aa).

Residues 16–139 (DAELRRRLTP…NSAALNFEAK (124 aa)) enclose the MsrB domain. Zn(2+) contacts are provided by Cys-55, Cys-58, Cys-104, and Cys-107. The active-site Nucleophile is the Cys-128.

It belongs to the MsrB Met sulfoxide reductase family. It depends on Zn(2+) as a cofactor.

It carries out the reaction L-methionyl-[protein] + [thioredoxin]-disulfide + H2O = L-methionyl-(R)-S-oxide-[protein] + [thioredoxin]-dithiol. This chain is Peptide methionine sulfoxide reductase MsrB, found in Burkholderia thailandensis (strain ATCC 700388 / DSM 13276 / CCUG 48851 / CIP 106301 / E264).